We begin with the raw amino-acid sequence, 384 residues long: dTDP-dihydrostreptose--streptidine-6-phosphate dihydrostreptosyltransferase (384 aa).

It catalyses the reaction dTDP-L-dihydrostreptose + streptidine 6-phosphate = O-(1-&gt;4)-alpha-L-dihydrostreptosyl-streptidine 6-phosphate + dTDP + H(+). It functions in the pathway antibiotic biosynthesis; streptomycin biosynthesis. Functionally, is probably a dihydrostreptosyl glycosyltransferase, involved in the first glycosylation step condensing streptidine-6-phosphate and dihydrostreptose. In Streptomyces griseus, this protein is dTDP-dihydrostreptose--streptidine-6-phosphate dihydrostreptosyltransferase (strH).